A 262-amino-acid chain; its full sequence is MIDKSAFIHPTAIVEDGAVIGANAHIGPFCIVGPQVEIGEGTVLKSHVVVNGQTKIGRDNEIYQFASIGEVNQDLKYAGEPTRVEIGDRNRIRESVTIHRGTVQGGGLTKVGSDNLLMINAHVAHDCTVGNRCILANNATLAGHVSVDDFAIIGGMTAVHQFCIIGAHVMVGGCSGVAQDVPPYVIAQGNHATPFGVNIEGLKRRGFSREGLVAIRNAYKLLYRSGKTLDEAKLEIAELAEKHPEVKAFTEFFERSTRGPIR.

It belongs to the transferase hexapeptide repeat family. LpxA subfamily. As to quaternary structure, homotrimer.

It is found in the cytoplasm. It catalyses the reaction a (3R)-hydroxyacyl-[ACP] + UDP-N-acetyl-alpha-D-glucosamine = a UDP-3-O-[(3R)-3-hydroxyacyl]-N-acetyl-alpha-D-glucosamine + holo-[ACP]. It functions in the pathway glycolipid biosynthesis; lipid IV(A) biosynthesis; lipid IV(A) from (3R)-3-hydroxytetradecanoyl-[acyl-carrier-protein] and UDP-N-acetyl-alpha-D-glucosamine: step 1/6. In terms of biological role, involved in the biosynthesis of lipid A, a phosphorylated glycolipid that anchors the lipopolysaccharide to the outer membrane of the cell. This chain is Acyl-[acyl-carrier-protein]--UDP-N-acetylglucosamine O-acyltransferase, found in Salmonella paratyphi B (strain ATCC BAA-1250 / SPB7).